The primary structure comprises 62 residues: Large ribosomal subunit protein uL30 (62 aa).

Belongs to the universal ribosomal protein uL30 family. Part of the 50S ribosomal subunit.

The sequence is that of Large ribosomal subunit protein uL30 from Staphylococcus carnosus (strain TM300).